The sequence spans 84 residues: Small ribosomal subunit protein uS17 (84 aa).

Belongs to the universal ribosomal protein uS17 family. As to quaternary structure, part of the 30S ribosomal subunit.

One of the primary rRNA binding proteins, it binds specifically to the 5'-end of 16S ribosomal RNA. This Alkaliphilus metalliredigens (strain QYMF) protein is Small ribosomal subunit protein uS17.